A 156-amino-acid chain; its full sequence is Small ribosomal subunit protein uS7 (156 aa).

It belongs to the universal ribosomal protein uS7 family. In terms of assembly, part of the 30S ribosomal subunit. Contacts proteins S9 and S11.

One of the primary rRNA binding proteins, it binds directly to 16S rRNA where it nucleates assembly of the head domain of the 30S subunit. Is located at the subunit interface close to the decoding center, probably blocks exit of the E-site tRNA. This chain is Small ribosomal subunit protein uS7, found in Desulforamulus reducens (strain ATCC BAA-1160 / DSM 100696 / MI-1) (Desulfotomaculum reducens).